Here is a 486-residue protein sequence, read N- to C-terminus: NGFI-A-binding protein 1 (486 aa).

Positions 4–82 (ALPRTLGELQ…RDWVTNPGLF (79 aa)) are NCD1. Residues Lys-126, Lys-129, and Lys-143 each participate in a glycyl lysine isopeptide (Lys-Gly) (interchain with G-Cter in SUMO2) cross-link. Residues 160 to 187 (WQGHHATESEHSLSPADLGSPASPKESS) form a disordered region. A phosphoserine mark is found at Ser-171 and Ser-182. A Glycyl lysine isopeptide (Lys-Gly) (interchain with G-Cter in SUMO2) cross-link involves residue Lys-211. An NCD2 region spans residues 220-309 (LLKNNKKLAK…ARQVSREVTY (90 aa)). The segment at 306-337 (EVTYKYTYRTTRLKCGERDELSPKRIKIEDGF) is necessary for nuclear localization. At Ser-327 the chain carries Phosphoserine. A Glycyl lysine isopeptide (Lys-Gly) (interchain with G-Cter in SUMO1); alternate cross-link involves residue Lys-332. Lys-332 participates in a covalent cross-link: Glycyl lysine isopeptide (Lys-Gly) (interchain with G-Cter in SUMO2); alternate. Residues Lys-354, Lys-368, and Lys-372 each participate in a glycyl lysine isopeptide (Lys-Gly) (interchain with G-Cter in SUMO2) cross-link. The interval 398 to 438 (RQSSGEQSPDGGLPSDSSDGQGERPLNLRIPSVQNRQPHHF) is disordered. Over residues 404-417 (QSPDGGLPSDSSDG) the composition is skewed to low complexity. Position 405 is a phosphoserine (Ser-405). Glycyl lysine isopeptide (Lys-Gly) (interchain with G-Cter in SUMO2) cross-links involve residues Lys-453, Lys-464, and Lys-476. Lys-479 participates in a covalent cross-link: Glycyl lysine isopeptide (Lys-Gly) (interchain with G-Cter in SUMO1); alternate. Lys-479 is covalently cross-linked (Glycyl lysine isopeptide (Lys-Gly) (interchain with G-Cter in SUMO2); alternate).

The protein belongs to the NAB family. Homomultimers may associate with EGR1 bound to DNA. As to expression, widely expressed in adult. In day 16 embryo highest levels in forebrain, thymus, salivary gland and cartilage.

It is found in the nucleus. Acts as a transcriptional repressor for zinc finger transcription factors EGR1 and EGR2. This is NGFI-A-binding protein 1 (Nab1) from Mus musculus (Mouse).